Here is a 558-residue protein sequence, read N- to C-terminus: Mitochondrial nucleoid-associated protein 1 (558 aa).

The Extracellular portion of the chain corresponds to M1–S527. Disordered regions lie at residues K29–A88, L130–T205, and L222–K269. Residues S36–K45 are compositionally biased toward polar residues. The span at Q51–T81 shows a compositional bias: basic and acidic residues. 2 stretches are compositionally biased toward polar residues: residues Q131–T144 and S187–T197. A helical transmembrane segment spans residues G528–F548. Residues K549–K558 are Cytoplasmic-facing.

Its subcellular location is the mitochondrion inner membrane. It is found in the mitochondrion matrix. It localises to the mitochondrion nucleoid. Critical regulator of mitochondrial DNA (mtDNA) abundance. Binds dsDNA throughout the mitochondrial genome without sequence specificity and controls mtDNA copy number by promoting its replication. Also plays important roles in mitochondrial metabolism and cell proliferation. The polypeptide is Mitochondrial nucleoid-associated protein 1 (Mus musculus (Mouse)).